The sequence spans 291 residues: Phosphatidylglycerol--prolipoprotein diacylglyceryl transferase (291 aa).

Transmembrane regions (helical) follow at residues 21 to 41 (VALH…MWLA), 60 to 80 (LLYA…VLFY), 96 to 116 (WDGG…MIIF), 130 to 150 (FIAP…FING), 198 to 218 (SQLY…NLFI), 225 to 245 (GAVS…VEFF), and 260 to 280 (ISMG…MMVW). Arg143 contacts a 1,2-diacyl-sn-glycero-3-phospho-(1'-sn-glycerol).

Belongs to the Lgt family.

Its subcellular location is the cell inner membrane. It catalyses the reaction L-cysteinyl-[prolipoprotein] + a 1,2-diacyl-sn-glycero-3-phospho-(1'-sn-glycerol) = an S-1,2-diacyl-sn-glyceryl-L-cysteinyl-[prolipoprotein] + sn-glycerol 1-phosphate + H(+). It functions in the pathway protein modification; lipoprotein biosynthesis (diacylglyceryl transfer). Functionally, catalyzes the transfer of the diacylglyceryl group from phosphatidylglycerol to the sulfhydryl group of the N-terminal cysteine of a prolipoprotein, the first step in the formation of mature lipoproteins. In Salmonella newport (strain SL254), this protein is Phosphatidylglycerol--prolipoprotein diacylglyceryl transferase.